Reading from the N-terminus, the 280-residue chain is Fe-S cluster assembly protein DRE2 (280 aa).

The segment at 1 to 121 is N-terminal SAM-like domain; it reads MSNLLVFDNS…TTLLKKSGGG (121 aa). The interval 122–176 is linker; sequence PKKFAFKRASPATAAPSTNGTNPAATVNLNSVVTLSMDDDDLMDEDDLMEDDTNL. Residues Cys186, Cys198, Cys201, and Cys203 each coordinate [2Fe-2S] cluster. The tract at residues 186–203 is fe-S binding site A; it reads CDPGPGKKRRKACKDCTC. Residues Cys244, Cys247, Cys255, and Cys258 each contribute to the [4Fe-4S] cluster site. 2 short sequence motifs (cx2C motif) span residues 244-247 and 255-258; these read CGSC and CDGC. The segment at 244 to 258 is fe-S binding site B; that stretch reads CGSCALGDAFRCDGC.

This sequence belongs to the anamorsin family. In terms of assembly, monomer. Interacts with TAH18. Interacts with MIA40. It depends on [2Fe-2S] cluster as a cofactor. Requires [4Fe-4S] cluster as cofactor.

It localises to the cytoplasm. The protein resides in the mitochondrion intermembrane space. Component of the cytosolic iron-sulfur (Fe-S) protein assembly (CIA) machinery required for the maturation of extramitochondrial Fe-S proteins. Part of an electron transfer chain functioning in an early step of cytosolic Fe-S biogenesis, facilitating the de novo assembly of a [4Fe-4S] cluster on the scaffold complex CFD1-NBP35. Electrons are transferred to DRE2 from NADPH via the FAD- and FMN-containing protein TAH18. TAH18-DRE2 are also required for the assembly of the diferric tyrosyl radical cofactor of ribonucleotide reductase (RNR), probably by providing electrons for reduction during radical cofactor maturation in the catalytic small subunit RNR2. This is Fe-S cluster assembly protein DRE2 from Yarrowia lipolytica (strain CLIB 122 / E 150) (Yeast).